The sequence spans 65 residues: Large ribosomal subunit protein bL33 (65 aa).

Positions 20–40 are disordered; that stretch reads VPPSEKRSPGVSRYTTEKNRR.

This sequence belongs to the bacterial ribosomal protein bL33 family.

The sequence is that of Large ribosomal subunit protein bL33 from Prochlorococcus marinus (strain MIT 9211).